The chain runs to 232 residues: Large ribosomal subunit protein uL1 (232 aa).

This sequence belongs to the universal ribosomal protein uL1 family. As to quaternary structure, part of the 50S ribosomal subunit.

Functionally, binds directly to 23S rRNA. The L1 stalk is quite mobile in the ribosome, and is involved in E site tRNA release. Its function is as follows. Protein L1 is also a translational repressor protein, it controls the translation of the L11 operon by binding to its mRNA. The chain is Large ribosomal subunit protein uL1 from Maricaulis maris (strain MCS10) (Caulobacter maris).